Reading from the N-terminus, the 238-residue chain is Endonuclease V (238 aa).

Mg(2+) contacts are provided by aspartate 46 and aspartate 116.

It belongs to the endonuclease V family. Requires Mg(2+) as cofactor.

Its subcellular location is the cytoplasm. The catalysed reaction is Endonucleolytic cleavage at apurinic or apyrimidinic sites to products with a 5'-phosphate.. Functionally, DNA repair enzyme involved in the repair of deaminated bases. Selectively cleaves double-stranded DNA at the second phosphodiester bond 3' to a deoxyinosine leaving behind the intact lesion on the nicked DNA. The polypeptide is Endonuclease V (Bacillus velezensis (strain DSM 23117 / BGSC 10A6 / LMG 26770 / FZB42) (Bacillus amyloliquefaciens subsp. plantarum)).